Reading from the N-terminus, the 258-residue chain is Pyridoxine 5'-phosphate synthase (258 aa).

Asparagine 6 contacts 3-amino-2-oxopropyl phosphate. Position 8 to 9 (8 to 9) interacts with 1-deoxy-D-xylulose 5-phosphate; the sequence is DH. Arginine 17 serves as a coordination point for 3-amino-2-oxopropyl phosphate. The active-site Proton acceptor is histidine 42. Arginine 44 and histidine 49 together coordinate 1-deoxy-D-xylulose 5-phosphate. The active-site Proton acceptor is the glutamate 69. 1-deoxy-D-xylulose 5-phosphate is bound at residue threonine 99. Histidine 213 acts as the Proton donor in catalysis. 3-amino-2-oxopropyl phosphate is bound by residues glycine 214 and 235–236; that span reads GQ.

This sequence belongs to the PNP synthase family. As to quaternary structure, homooctamer; tetramer of dimers.

The protein localises to the cytoplasm. The catalysed reaction is 3-amino-2-oxopropyl phosphate + 1-deoxy-D-xylulose 5-phosphate = pyridoxine 5'-phosphate + phosphate + 2 H2O + H(+). It functions in the pathway cofactor biosynthesis; pyridoxine 5'-phosphate biosynthesis; pyridoxine 5'-phosphate from D-erythrose 4-phosphate: step 5/5. In terms of biological role, catalyzes the complicated ring closure reaction between the two acyclic compounds 1-deoxy-D-xylulose-5-phosphate (DXP) and 3-amino-2-oxopropyl phosphate (1-amino-acetone-3-phosphate or AAP) to form pyridoxine 5'-phosphate (PNP) and inorganic phosphate. The polypeptide is Pyridoxine 5'-phosphate synthase (Sulfurovum sp. (strain NBC37-1)).